The primary structure comprises 162 residues: Nucleotide-binding protein Mpe_A3039 (162 aa).

Belongs to the YajQ family.

Nucleotide-binding protein. This Methylibium petroleiphilum (strain ATCC BAA-1232 / LMG 22953 / PM1) protein is Nucleotide-binding protein Mpe_A3039.